The primary structure comprises 142 residues: Nucleoside diphosphate kinase (142 aa).

Residues K11, F59, R87, T93, R104, and N114 each contribute to the ATP site. H117 acts as the Pros-phosphohistidine intermediate in catalysis.

This sequence belongs to the NDK family. In terms of assembly, homotetramer. Requires Mg(2+) as cofactor.

Its subcellular location is the cytoplasm. The enzyme catalyses a 2'-deoxyribonucleoside 5'-diphosphate + ATP = a 2'-deoxyribonucleoside 5'-triphosphate + ADP. It catalyses the reaction a ribonucleoside 5'-diphosphate + ATP = a ribonucleoside 5'-triphosphate + ADP. Functionally, major role in the synthesis of nucleoside triphosphates other than ATP. The ATP gamma phosphate is transferred to the NDP beta phosphate via a ping-pong mechanism, using a phosphorylated active-site intermediate. In Yersinia pseudotuberculosis serotype O:1b (strain IP 31758), this protein is Nucleoside diphosphate kinase.